Here is a 149-residue protein sequence, read N- to C-terminus: D-aminoacyl-tRNA deacylase (149 aa).

The Gly-cisPro motif, important for rejection of L-amino acids motif lies at 137–138; it reads GP.

The protein belongs to the DTD family. As to quaternary structure, homodimer.

It is found in the cytoplasm. It catalyses the reaction glycyl-tRNA(Ala) + H2O = tRNA(Ala) + glycine + H(+). The catalysed reaction is a D-aminoacyl-tRNA + H2O = a tRNA + a D-alpha-amino acid + H(+). Functionally, an aminoacyl-tRNA editing enzyme that deacylates mischarged D-aminoacyl-tRNAs. Also deacylates mischarged glycyl-tRNA(Ala), protecting cells against glycine mischarging by AlaRS. Acts via tRNA-based rather than protein-based catalysis; rejects L-amino acids rather than detecting D-amino acids in the active site. By recycling D-aminoacyl-tRNA to D-amino acids and free tRNA molecules, this enzyme counteracts the toxicity associated with the formation of D-aminoacyl-tRNA entities in vivo and helps enforce protein L-homochirality. This chain is D-aminoacyl-tRNA deacylase, found in Clostridium botulinum (strain Kyoto / Type A2).